A 160-amino-acid polypeptide reads, in one-letter code: Crossover junction endodeoxyribonuclease RuvC (160 aa).

Catalysis depends on residues D7, E67, and D138. Mg(2+)-binding residues include D7, E67, and D138.

It belongs to the RuvC family. In terms of assembly, homodimer which binds Holliday junction (HJ) DNA. The HJ becomes 2-fold symmetrical on binding to RuvC with unstacked arms; it has a different conformation from HJ DNA in complex with RuvA. In the full resolvosome a probable DNA-RuvA(4)-RuvB(12)-RuvC(2) complex forms which resolves the HJ. The cofactor is Mg(2+).

The protein resides in the cytoplasm. The enzyme catalyses Endonucleolytic cleavage at a junction such as a reciprocal single-stranded crossover between two homologous DNA duplexes (Holliday junction).. In terms of biological role, the RuvA-RuvB-RuvC complex processes Holliday junction (HJ) DNA during genetic recombination and DNA repair. Endonuclease that resolves HJ intermediates. Cleaves cruciform DNA by making single-stranded nicks across the HJ at symmetrical positions within the homologous arms, yielding a 5'-phosphate and a 3'-hydroxyl group; requires a central core of homology in the junction. The consensus cleavage sequence is 5'-(A/T)TT(C/G)-3'. Cleavage occurs on the 3'-side of the TT dinucleotide at the point of strand exchange. HJ branch migration catalyzed by RuvA-RuvB allows RuvC to scan DNA until it finds its consensus sequence, where it cleaves and resolves the cruciform DNA. In Brachyspira hyodysenteriae (strain ATCC 49526 / WA1), this protein is Crossover junction endodeoxyribonuclease RuvC.